Here is a 146-residue protein sequence, read N- to C-terminus: Protein MGF 100-3L (146 aa).

Belongs to the asfivirus MGF 100 family.

In terms of biological role, plays a role in virus cell tropism, and may be required for efficient virus replication in macrophages. The polypeptide is Protein MGF 100-3L (Ornithodoros (relapsing fever ticks)).